The following is a 667-amino-acid chain: Probable endo-1,3(4)-beta-glucanase AFLA_105200 (667 aa).

A signal peptide spans 1-24 (MSSSSFVWTVGSIALSSLITPTIA). Residues 25 to 288 (DGSGSRYQLT…WAGGVFGDSG (264 aa)) enclose the GH16 domain. Asparagine 63 carries an N-linked (GlcNAc...) asparagine glycan. Glutamate 144 acts as the Nucleophile in catalysis. Residue glutamate 149 is the Proton donor of the active site. Composition is skewed to polar residues over residues 354 to 363 (VPSVTSTPIL) and 379 to 394 (ATSSAVPEPANPQTSV). 2 disordered regions span residues 354–427 (VPSV…ADAV) and 448–646 (GTIQ…AGAS). Composition is skewed to low complexity over residues 395-427 (AGAETTAAPAPSPETTAAPASPSSDDSEGADAV), 448-483 (GTIQTIGGGETEVSPASSTVESAATPAAPTPTSQEP), and 574-622 (APTS…EATA). Over residues 623 to 637 (PTETDSGASTGTNPE) the composition is skewed to polar residues. Glycine 644 carries GPI-anchor amidated glycine lipidation. Positions 645-667 (ASKSVGISGLAGIVCGIAMAMLA) are cleaved as a propeptide — removed in mature form.

The protein belongs to the glycosyl hydrolase 16 family.

Its subcellular location is the cell membrane. The enzyme catalyses Endohydrolysis of (1-&gt;3)- or (1-&gt;4)-linkages in beta-D-glucans when the glucose residue whose reducing group is involved in the linkage to be hydrolyzed is itself substituted at C-3.. Its function is as follows. Mixed-linked glucanase involved in the degradation of complex natural cellulosic substrates. The chain is Probable endo-1,3(4)-beta-glucanase AFLA_105200 from Aspergillus flavus (strain ATCC 200026 / FGSC A1120 / IAM 13836 / NRRL 3357 / JCM 12722 / SRRC 167).